The sequence spans 362 residues: Uracil-DNA glycosylase (362 aa).

Residues 28–97 (ASVAPNDPTE…AGPTEDPNFA (70 aa)) form a disordered region. The active-site Proton acceptor is Asp-205.

This sequence belongs to the uracil-DNA glycosylase (UDG) superfamily. UNG family.

It localises to the host nucleus. The enzyme catalyses Hydrolyzes single-stranded DNA or mismatched double-stranded DNA and polynucleotides, releasing free uracil.. Its function is as follows. Excises uracil residues from the DNA which can arise as a result of misincorporation of dUMP residues by DNA polymerase or deamination of cytosines. Therefore may reduce deleterious uracil incorporation into the viral genome, particularly in terminally differentiated cells which lack DNA repair enzymes. This Psittacid herpesvirus 1 (isolate Amazon parrot/-/97-0001/1997) (PsHV-1) protein is Uracil-DNA glycosylase (UL2).